The sequence spans 347 residues: Protein RecA (347 aa).

Residue 67-74 participates in ATP binding; that stretch reads GPESSGKT. The tract at residues 326 to 347 is disordered; it reads DKLLPGRAPSSEAQGTESGQEA. A compositionally biased stretch (polar residues) spans 336–347; that stretch reads SEAQGTESGQEA.

This sequence belongs to the RecA family.

The protein resides in the cytoplasm. Its function is as follows. Can catalyze the hydrolysis of ATP in the presence of single-stranded DNA, the ATP-dependent uptake of single-stranded DNA by duplex DNA, and the ATP-dependent hybridization of homologous single-stranded DNAs. It interacts with LexA causing its activation and leading to its autocatalytic cleavage. The chain is Protein RecA from Alkalilimnicola ehrlichii (strain ATCC BAA-1101 / DSM 17681 / MLHE-1).